The following is a 560-amino-acid chain: Dihydroxy-acid dehydratase (560 aa).

Aspartate 78 is a Mg(2+) binding site. Cysteine 119 contacts [2Fe-2S] cluster. Mg(2+) contacts are provided by aspartate 120 and lysine 121. At lysine 121 the chain carries N6-carboxylysine. Cysteine 192 provides a ligand contact to [2Fe-2S] cluster. Glutamate 446 contacts Mg(2+). Serine 472 (proton acceptor) is an active-site residue.

The protein belongs to the IlvD/Edd family. Homodimer. The cofactor is [2Fe-2S] cluster. Mg(2+) is required as a cofactor.

The enzyme catalyses (2R)-2,3-dihydroxy-3-methylbutanoate = 3-methyl-2-oxobutanoate + H2O. It carries out the reaction (2R,3R)-2,3-dihydroxy-3-methylpentanoate = (S)-3-methyl-2-oxopentanoate + H2O. It participates in amino-acid biosynthesis; L-isoleucine biosynthesis; L-isoleucine from 2-oxobutanoate: step 3/4. Its pathway is amino-acid biosynthesis; L-valine biosynthesis; L-valine from pyruvate: step 3/4. Its function is as follows. Functions in the biosynthesis of branched-chain amino acids. Catalyzes the dehydration of (2R,3R)-2,3-dihydroxy-3-methylpentanoate (2,3-dihydroxy-3-methylvalerate) into 2-oxo-3-methylpentanoate (2-oxo-3-methylvalerate) and of (2R)-2,3-dihydroxy-3-methylbutanoate (2,3-dihydroxyisovalerate) into 2-oxo-3-methylbutanoate (2-oxoisovalerate), the penultimate precursor to L-isoleucine and L-valine, respectively. The protein is Dihydroxy-acid dehydratase of Anaeromyxobacter sp. (strain K).